The sequence spans 253 residues: Sec-independent protein translocase protein TatC (253 aa).

Transmembrane regions (helical) follow at residues 18–38 (VSVGTILVAFLGCFHFWKSIF), 69–89 (AIVISMPIIFWQLWLFIAPGL), 96–116 (VILPFVFFGSGMFLIGAAFSY), 151–171 (LILGFGVAFELPVLAYFLAKV), 187–207 (IVVIFIVAAIITPPDVVSQIF), and 208–228 (MALPLVGLYGLSILIAKMVNP). The disordered stretch occupies residues 231-253 (KDNENNNENNNENNTKENTKSES). Positions 244–253 (NTKENTKSES) are enriched in basic and acidic residues.

It belongs to the TatC family. As to quaternary structure, the Tat system comprises two distinct complexes: a TatABC complex, containing multiple copies of TatA, TatB and TatC subunits, and a separate TatA complex, containing only TatA subunits. Substrates initially bind to the TatABC complex, which probably triggers association of the separate TatA complex to form the active translocon.

It is found in the cell inner membrane. Functionally, part of the twin-arginine translocation (Tat) system that transports large folded proteins containing a characteristic twin-arginine motif in their signal peptide across membranes. Together with TatB, TatC is part of a receptor directly interacting with Tat signal peptides. This Helicobacter pylori (strain ATCC 700392 / 26695) (Campylobacter pylori) protein is Sec-independent protein translocase protein TatC.